A 159-amino-acid polypeptide reads, in one-letter code: Growth arrest and DNA damage-inducible protein GADD45 gamma (159 aa).

The homodimerization stretch occupies residues 43-86 (VYESAKVLNVDPDNVTFCVLAADEEDEGDIALQIHFTLIQAFCC).

The protein belongs to the GADD45 family. Undergoes concentration-dependent homodimerization, which is required for growth inhibititory activity and enhances interaction with PCNA. Interacts with GADD45GIP1. Interacts with PCNA.

Involved in the regulation of growth and apoptosis. Mediates activation of stress-responsive MTK1/MEKK4 MAPKKK. The sequence is that of Growth arrest and DNA damage-inducible protein GADD45 gamma (GADD45G) from Bos taurus (Bovine).